Consider the following 122-residue polypeptide: Large ribosomal subunit protein uL14c (122 aa).

It belongs to the universal ribosomal protein uL14 family. Part of the 50S ribosomal subunit.

The protein resides in the plastid. It localises to the chloroplast. Its function is as follows. Binds to 23S rRNA. The chain is Large ribosomal subunit protein uL14c from Phalaenopsis aphrodite subsp. formosana (Moth orchid).